The primary structure comprises 237 residues: MNTLIQGPDHPSNAMSSRANNRSNNSRCPTCIDELDAMARNCPAHNTVNTVSRRQRRNAARAAAYRNANARVPLPLPVVSVSRPQAKASLRLPNNQVWVTRKASEWSAKTVDTNDAIPFKTIVEGIPEIGAETKFFRLLIGFVAVSDGTFGMVDGVTGDVIPDPPVVGRLGFKKNTYRSRDFDLGGKLLNQLDDRAVVWCLDERRREAKRVQLAGYWIAISKPAPLMPPEDFLVNQD.

The disordered stretch occupies residues 1–26 (MNTLIQGPDHPSNAMSSRANNRSNNS). Residues 12-26 (SNAMSSRANNRSNNS) show a composition bias toward low complexity.

This sequence belongs to the alphamovirus/ilarvirus capsid protein family.

It localises to the virion. Functionally, capsid protein self-assembles to form an icosahedral capsid with a T=3 symmetry, about 29 nm in diameter, and consisting of 12 capsid protein pentamers and 20 capsid protein hexamers. Binds to the to the 3' end of the nonpolyadenylated viral RNA and is involved in viral RNA translation initiation. Probably binds RNA and plays a role in packaging. The protein is Capsid protein of Asparagus officinalis (Garden asparagus).